The following is a 285-amino-acid chain: Polyamine aminopropyltransferase (285 aa).

The PABS domain maps to 2–237 (EFWFSELHSP…GYWLFGFASK (236 aa)). S-methyl-5'-thioadenosine is bound at residue Gln31. Asp86 is a binding site for spermidine. S-methyl-5'-thioadenosine contacts are provided by residues Glu106 and 137–138 (DA). Catalysis depends on Asp155, which acts as the Proton acceptor.

The protein belongs to the spermidine/spermine synthase family. Homodimer or homotetramer.

The protein resides in the cytoplasm. The catalysed reaction is S-adenosyl 3-(methylsulfanyl)propylamine + putrescine = S-methyl-5'-thioadenosine + spermidine + H(+). It participates in amine and polyamine biosynthesis; spermidine biosynthesis; spermidine from putrescine: step 1/1. Functionally, catalyzes the irreversible transfer of a propylamine group from the amino donor S-adenosylmethioninamine (decarboxy-AdoMet) to putrescine (1,4-diaminobutane) to yield spermidine. The sequence is that of Polyamine aminopropyltransferase from Lachnospira eligens (strain ATCC 27750 / DSM 3376 / VPI C15-48 / C15-B4) (Eubacterium eligens).